Consider the following 89-residue polypeptide: Small ribosomal subunit protein uS15 (89 aa).

The protein belongs to the universal ribosomal protein uS15 family. In terms of assembly, part of the 30S ribosomal subunit. Forms a bridge to the 50S subunit in the 70S ribosome, contacting the 23S rRNA.

In terms of biological role, one of the primary rRNA binding proteins, it binds directly to 16S rRNA where it helps nucleate assembly of the platform of the 30S subunit by binding and bridging several RNA helices of the 16S rRNA. Its function is as follows. Forms an intersubunit bridge (bridge B4) with the 23S rRNA of the 50S subunit in the ribosome. The chain is Small ribosomal subunit protein uS15 from Geobacillus thermodenitrificans (strain NG80-2).